The primary structure comprises 723 residues: Ribosome quality control complex subunit 1 (723 aa).

The disordered stretch occupies residues 21 to 125 (SNSNANKMTS…DKGSDDDDDD (105 aa)). A compositionally biased stretch (polar residues) spans 27–37 (KMTSGKSTAGN). A compositionally biased stretch (basic residues) spans 93-108 (SSRRKKNKKAKRKQKN). A compositionally biased stretch (basic and acidic residues) spans 109-118 (HTAEAAKDKG). At serine 119 the chain carries Phosphoserine. Threonine 158 is modified (phosphothreonine). Serine 160 is subject to Phosphoserine.

This sequence belongs to the TCF25 family. As to quaternary structure, component of the ribosome quality control complex (RQC), composed of the E3 ubiquitin ligase RKR1/LTN1, RQC1 and RQC2, as well as CDC48 and its ubiquitin-binding cofactors. RQC forms a stable complex with 60S ribosomal subunits.

It localises to the cytoplasm. In terms of biological role, component of the ribosome quality control complex (RQC), a ribosome-associated complex that mediates ubiquitination and extraction of incompletely synthesized nascent chains for proteasomal degradation. Within the RQC complex, RQC1 is essential for the recruitment of CDC48 to incompletely synthesized nascent polypeptides that are ubiquitinated by RKR1/LTN1. The chain is Ribosome quality control complex subunit 1 from Saccharomyces cerevisiae (strain ATCC 204508 / S288c) (Baker's yeast).